Consider the following 346-residue polypeptide: Histidinol-phosphate aminotransferase (346 aa).

Lysine 209 is modified (N6-(pyridoxal phosphate)lysine).

It belongs to the class-II pyridoxal-phosphate-dependent aminotransferase family. Histidinol-phosphate aminotransferase subfamily. Homodimer. The cofactor is pyridoxal 5'-phosphate.

The catalysed reaction is L-histidinol phosphate + 2-oxoglutarate = 3-(imidazol-4-yl)-2-oxopropyl phosphate + L-glutamate. The protein operates within amino-acid biosynthesis; L-histidine biosynthesis; L-histidine from 5-phospho-alpha-D-ribose 1-diphosphate: step 7/9. The sequence is that of Histidinol-phosphate aminotransferase from Vibrio vulnificus (strain CMCP6).